Consider the following 307-residue polypeptide: Agmatinase (307 aa).

Positions 128, 151, 153, 155, 232, and 234 each coordinate Mn(2+).

It belongs to the arginase family. Agmatinase subfamily. Requires Mn(2+) as cofactor.

The enzyme catalyses agmatine + H2O = urea + putrescine. Its pathway is amine and polyamine biosynthesis; putrescine biosynthesis via agmatine pathway; putrescine from agmatine: step 1/1. In terms of biological role, catalyzes the formation of putrescine from agmatine. This is Agmatinase from Neisseria meningitidis serogroup C (strain 053442).